The chain runs to 308 residues: tRNA pseudouridine synthase B (308 aa).

Asp-47 acts as the Nucleophile in catalysis.

Belongs to the pseudouridine synthase TruB family. Type 1 subfamily.

The enzyme catalyses uridine(55) in tRNA = pseudouridine(55) in tRNA. In terms of biological role, responsible for synthesis of pseudouridine from uracil-55 in the psi GC loop of transfer RNAs. The sequence is that of tRNA pseudouridine synthase B from Xanthomonas oryzae pv. oryzae (strain MAFF 311018).